The primary structure comprises 316 residues: MTRVESNNTASQAPPSGAGTLEQQVEVVIVTGLSGAGRGTAAKVLEDLGWYVADNLPPELIGRMVELGAAADPPIRRLALVMDVRSRFFTGDLSVVADQLRALGLRTRVLFLEASDDVLIRRFGFARRRHPLQSESADGTLSAGIAVERVRLAGVKAAADLVIDTTELSIHQLHRKLEEAYGGGAPAALQLTVQSFGFKYGVPLDADMVLDVRFLPNPHWIPELREHSGQETVVSEYVLSRPGAQDYLHTCHHLVDLTTSGYRQEGKRYMTVAVGCTGGKHRSVAIAEALGELIGADTSAESADVVRVVHRDLGRE.

32-39 (GLSGAGRG) lines the ATP pocket. 83-86 (DVRS) contributes to the GTP binding site.

Belongs to the RapZ-like family.

Its function is as follows. Displays ATPase and GTPase activities. The sequence is that of Nucleotide-binding protein NFA_35930 from Nocardia farcinica (strain IFM 10152).